The primary structure comprises 506 residues: GMP synthase [glutamine-hydrolyzing] (506 aa).

A Glutamine amidotransferase type-1 domain is found at 2 to 190 (SIVILDFGSQ…FLDICGVTRD (189 aa)). Cysteine 79 serves as the catalytic Nucleophile. Residues histidine 165 and glutamate 167 contribute to the active site. In terms of domain architecture, GMPS ATP-PPase spans 191–381 (WNAEHIVDEL…LGLPDHIRMR (191 aa)). Position 219 to 225 (219 to 225 (SGGVDSS)) interacts with ATP.

As to quaternary structure, homodimer.

It carries out the reaction XMP + L-glutamine + ATP + H2O = GMP + L-glutamate + AMP + diphosphate + 2 H(+). The protein operates within purine metabolism; GMP biosynthesis; GMP from XMP (L-Gln route): step 1/1. Its function is as follows. Catalyzes the synthesis of GMP from XMP. This Deinococcus radiodurans (strain ATCC 13939 / DSM 20539 / JCM 16871 / CCUG 27074 / LMG 4051 / NBRC 15346 / NCIMB 9279 / VKM B-1422 / R1) protein is GMP synthase [glutamine-hydrolyzing] (guaA).